Reading from the N-terminus, the 738-residue chain is Sporulation kinase E (738 aa).

4 PAS domains span residues 29–99 (ELNQ…FKKG), 150–220 (NEQL…NRKG), 271–342 (SEER…YGEI), and 391–462 (SELK…FDEM). In terms of domain architecture, Histidine kinase spans 523 to 729 (GIAHEIRNPM…VFHITLPVRQ (207 aa)). Phosphohistidine; by autocatalysis is present on H526.

The catalysed reaction is ATP + protein L-histidine = ADP + protein N-phospho-L-histidine.. Its function is as follows. Phosphorylates the sporulation-regulatory protein spo0A under biofilm growth conditions. Also able to weakly phosphorylate spo0F. This Bacillus subtilis (strain 168) protein is Sporulation kinase E (kinE).